Consider the following 264-residue polypeptide: Thiazole synthase (264 aa).

The active-site Schiff-base intermediate with DXP is the lysine 106. 1-deoxy-D-xylulose 5-phosphate is bound by residues glycine 167, 193-194 (AG), and 215-216 (NS).

It belongs to the ThiG family. As to quaternary structure, homotetramer. Forms heterodimers with either ThiH or ThiS.

It is found in the cytoplasm. It carries out the reaction [ThiS sulfur-carrier protein]-C-terminal-Gly-aminoethanethioate + 2-iminoacetate + 1-deoxy-D-xylulose 5-phosphate = [ThiS sulfur-carrier protein]-C-terminal Gly-Gly + 2-[(2R,5Z)-2-carboxy-4-methylthiazol-5(2H)-ylidene]ethyl phosphate + 2 H2O + H(+). It participates in cofactor biosynthesis; thiamine diphosphate biosynthesis. In terms of biological role, catalyzes the rearrangement of 1-deoxy-D-xylulose 5-phosphate (DXP) to produce the thiazole phosphate moiety of thiamine. Sulfur is provided by the thiocarboxylate moiety of the carrier protein ThiS. In vitro, sulfur can be provided by H(2)S. This is Thiazole synthase from Stutzerimonas stutzeri (strain A1501) (Pseudomonas stutzeri).